The chain runs to 175 residues: Translation initiation factor IF-3 (175 aa).

The protein belongs to the IF-3 family. In terms of assembly, monomer.

It localises to the cytoplasm. IF-3 binds to the 30S ribosomal subunit and shifts the equilibrium between 70S ribosomes and their 50S and 30S subunits in favor of the free subunits, thus enhancing the availability of 30S subunits on which protein synthesis initiation begins. The polypeptide is Translation initiation factor IF-3 (Aquifex aeolicus (strain VF5)).